Consider the following 164-residue polypeptide: Ribosome maturation factor RimM (164 aa).

The region spanning 90-161 (EGRYYVADII…EIIIKPVKTW (72 aa)) is the PRC barrel domain.

It belongs to the RimM family. As to quaternary structure, binds ribosomal protein uS19.

It is found in the cytoplasm. An accessory protein needed during the final step in the assembly of 30S ribosomal subunit, possibly for assembly of the head region. Essential for efficient processing of 16S rRNA. May be needed both before and after RbfA during the maturation of 16S rRNA. It has affinity for free ribosomal 30S subunits but not for 70S ribosomes. The sequence is that of Ribosome maturation factor RimM from Clostridium tetani (strain Massachusetts / E88).